Consider the following 425-residue polypeptide: Serine--tRNA ligase (425 aa).

231–233 (TAE) provides a ligand contact to L-serine. Position 262–264 (262–264 (RSE)) interacts with ATP. An L-serine-binding site is contributed by E285. 349–352 (EISS) contributes to the ATP binding site. Residue S385 participates in L-serine binding.

It belongs to the class-II aminoacyl-tRNA synthetase family. Type-1 seryl-tRNA synthetase subfamily. In terms of assembly, homodimer. The tRNA molecule binds across the dimer.

The protein resides in the cytoplasm. It carries out the reaction tRNA(Ser) + L-serine + ATP = L-seryl-tRNA(Ser) + AMP + diphosphate + H(+). The catalysed reaction is tRNA(Sec) + L-serine + ATP = L-seryl-tRNA(Sec) + AMP + diphosphate + H(+). It functions in the pathway aminoacyl-tRNA biosynthesis; selenocysteinyl-tRNA(Sec) biosynthesis; L-seryl-tRNA(Sec) from L-serine and tRNA(Sec): step 1/1. Its function is as follows. Catalyzes the attachment of serine to tRNA(Ser). Is also able to aminoacylate tRNA(Sec) with serine, to form the misacylated tRNA L-seryl-tRNA(Sec), which will be further converted into selenocysteinyl-tRNA(Sec). In Halalkalibacterium halodurans (strain ATCC BAA-125 / DSM 18197 / FERM 7344 / JCM 9153 / C-125) (Bacillus halodurans), this protein is Serine--tRNA ligase.